The chain runs to 264 residues: NAD-capped RNA hydrolase NudC (264 aa).

Substrate is bound at residue arginine 70. Residues cysteine 99 and cysteine 102 each coordinate Zn(2+). Substrate is bound at residue glutamate 112. Zn(2+)-binding residues include cysteine 117 and cysteine 120. A substrate-binding site is contributed by tyrosine 125. One can recognise a Nudix hydrolase domain in the interval 126–253 (PVICPSIIVA…TIARKLIHVT (128 aa)). Positions 162, 178, and 182 each coordinate a divalent metal cation. The Nudix box signature appears at 163–184 (GFVEVGETFEQAVQREVFEETG). 196 to 203 (QPWAFPNS) serves as a coordination point for substrate. Glutamate 223 is an a divalent metal cation binding site. Alanine 246 contributes to the substrate binding site.

Belongs to the Nudix hydrolase family. NudC subfamily. In terms of assembly, homodimer. It depends on Mg(2+) as a cofactor. The cofactor is Mn(2+). Requires Zn(2+) as cofactor.

The catalysed reaction is a 5'-end NAD(+)-phospho-ribonucleoside in mRNA + H2O = a 5'-end phospho-adenosine-phospho-ribonucleoside in mRNA + beta-nicotinamide D-ribonucleotide + 2 H(+). The enzyme catalyses NAD(+) + H2O = beta-nicotinamide D-ribonucleotide + AMP + 2 H(+). It catalyses the reaction NADH + H2O = reduced beta-nicotinamide D-ribonucleotide + AMP + 2 H(+). MRNA decapping enzyme that specifically removes the nicotinamide adenine dinucleotide (NAD) cap from a subset of mRNAs by hydrolyzing the diphosphate linkage to produce nicotinamide mononucleotide (NMN) and 5' monophosphate mRNA. The NAD-cap is present at the 5'-end of some mRNAs and stabilizes RNA against 5'-processing. Has preference for mRNAs with a 5'-end purine. Catalyzes the hydrolysis of a broad range of dinucleotide pyrophosphates. In Haemophilus influenzae (strain 86-028NP), this protein is NAD-capped RNA hydrolase NudC.